A 748-amino-acid polypeptide reads, in one-letter code: MPAHTRSLASKELCMNHQQIDAADKTERVTVGGMQVAKVLRDFLTESVLPRVGVDAERFWNGFGDIVRDMTPRNRELLARRDELQAQLDEYYRENPGKPDPEKYEAFLREIGYLVDEPAPAEIRTQNIDSEIATTAGPQLVVPILNARFALNAANARWGSLYDALYGTNAIPDEDGAERGAEYNPVRGQKVIQWGRDFLDAVLPLDGASHADVEKYNITDGKLAAHVNDGIYRLKDRDAYLGFTGYFEDPTSILLQNNGLHIELQIDPTHPIGKEDKTGLKDIILESAITTIMDFEDSVAAVDAEDKTLGYRNWFLLNTGELTEEVAKGDRTFTRKLNDDRVFIGKNGAELTLHGRSLLFVRNVGHLMTNPAILVDGEEIYEGIMDAIITTVCAIPGIAPQNKKKNSRKGSIYIVKPKQHGPEEVAFTNELFARVEDLLDLPRHTLKVGVMDEERRTSVNLDACIMEVADRLAFINTGFLDRTGDEIHTSMEAGAMVRKADMQTAPWKQAYEDNNVDAGIQRGLPGKAQIGKGMWAMTELMGEMLEKKIGQLREGANTAWVPSPTGATLHATHYHRVDVFKVQDELRAAGRRDSLGKILDVPVAPDTNWTDAEKREELDNNCQSILGYVVRWVEQGVGCSKVPDIHDIDLMEDRATLRISSQILANWLRHGVVTEEQVIESLERMAVVVDEQNAGDPNYLNMAPNFTESVAFQAARDLILKGTESPAGYTEPILHARRREFKELHGIK.

Acetyl-CoA is bound by residues Val141, 148–149 (RF), Ser298, and Arg335. Arg362 acts as the Proton acceptor in catalysis. Glyoxylate-binding positions include Arg362, Glu453, and 478–481 (GFLD). Glu453 and Asp481 together coordinate Mg(2+). Residue Pro562 coordinates acetyl-CoA. At Cys639 the chain carries Cysteine sulfenic acid (-SOH). Catalysis depends on Asp653, which acts as the Proton donor.

The protein belongs to the malate synthase family. GlcB subfamily. Monomer. Requires Mg(2+) as cofactor.

The protein localises to the cytoplasm. The catalysed reaction is glyoxylate + acetyl-CoA + H2O = (S)-malate + CoA + H(+). It functions in the pathway carbohydrate metabolism; glyoxylate cycle; (S)-malate from isocitrate: step 2/2. In terms of biological role, involved in the glycolate utilization. Catalyzes the condensation and subsequent hydrolysis of acetyl-coenzyme A (acetyl-CoA) and glyoxylate to form malate and CoA. This is Malate synthase G from Corynebacterium efficiens (strain DSM 44549 / YS-314 / AJ 12310 / JCM 11189 / NBRC 100395).